A 557-amino-acid polypeptide reads, in one-letter code: Formate--tetrahydrofolate ligase 2 (557 aa).

66 to 73 (TPAGEGKT) contributes to the ATP binding site.

It belongs to the formate--tetrahydrofolate ligase family.

It carries out the reaction (6S)-5,6,7,8-tetrahydrofolate + formate + ATP = (6R)-10-formyltetrahydrofolate + ADP + phosphate. The protein operates within one-carbon metabolism; tetrahydrofolate interconversion. The polypeptide is Formate--tetrahydrofolate ligase 2 (Streptococcus pyogenes serotype M18 (strain MGAS8232)).